The primary structure comprises 123 residues: UPF0482 protein YE2026 (123 aa).

A signal peptide spans 1 to 31 (MKITSLPRLMRVFLPVAVLALPLAWQTAALA). The segment at 47-66 (GNNDPMSKEQARQSQQQWDD) is disordered.

This sequence belongs to the UPF0482 family.

This is UPF0482 protein YE2026 from Yersinia enterocolitica serotype O:8 / biotype 1B (strain NCTC 13174 / 8081).